A 51-amino-acid chain; its full sequence is MANYQNASNRNSSNKLVAPGAQAAIDQMKFEIASEFGVNLGPDNSSSRRLG.

The protein belongs to the alpha/beta-type SASP family.

The protein is Protein SspM (sspM) of Mycolicibacterium phlei (Mycobacterium phlei).